The chain runs to 120 residues: Ribosome-binding factor A (120 aa).

This sequence belongs to the RbfA family. As to quaternary structure, monomer. Binds 30S ribosomal subunits, but not 50S ribosomal subunits or 70S ribosomes.

The protein localises to the cytoplasm. Its function is as follows. One of several proteins that assist in the late maturation steps of the functional core of the 30S ribosomal subunit. Associates with free 30S ribosomal subunits (but not with 30S subunits that are part of 70S ribosomes or polysomes). Required for efficient processing of 16S rRNA. May interact with the 5'-terminal helix region of 16S rRNA. This Rickettsia felis (strain ATCC VR-1525 / URRWXCal2) (Rickettsia azadi) protein is Ribosome-binding factor A.